The sequence spans 127 residues: Large ribosomal subunit protein bL12 (127 aa).

The segment at 98-127 is disordered; the sequence is PKPVKNGVSKEEAEEAKKQLVESGAEVEIK. Basic and acidic residues predominate over residues 105–117; sequence VSKEEAEEAKKQL.

This sequence belongs to the bacterial ribosomal protein bL12 family. In terms of assembly, homodimer. Part of the ribosomal stalk of the 50S ribosomal subunit. Forms a multimeric L10(L12)X complex, where L10 forms an elongated spine to which 2 to 4 L12 dimers bind in a sequential fashion. Binds GTP-bound translation factors.

In terms of biological role, forms part of the ribosomal stalk which helps the ribosome interact with GTP-bound translation factors. Is thus essential for accurate translation. This Geobacter sulfurreducens (strain ATCC 51573 / DSM 12127 / PCA) protein is Large ribosomal subunit protein bL12.